The chain runs to 416 residues: Leu/Ile/Val-binding protein homolog 4 (416 aa).

An N-terminal signal peptide occupies residues 1–26 (MSLKVFLQAGVACAALSLAGAAGASA).

This sequence belongs to the leucine-binding protein family.

In terms of biological role, component of an amino-acid transport system. This chain is Leu/Ile/Val-binding protein homolog 4, found in Brucella melitensis biotype 1 (strain ATCC 23456 / CCUG 17765 / NCTC 10094 / 16M).